We begin with the raw amino-acid sequence, 602 residues long: MKEYKLENIRNFSIIAHIDHGKSTIADRLLESTSTVEQREMREQLLDSMDLERERGITIKAHPVTMYYKYNGEVYQLNLIDTPGHVDFSYEVSRSLTACEGALLIVDAAQGVQAQSLANVYLALERDLEIIPILNKIDLPAANPEKIRKQIEDYIGLDTTHAIACSAKTGEGISEILEAIVELIPPPKSPEETELKALIFDSHYDPYVGIMVYVRVMSGEIKKGDRITFMATKGSSFEVLGVGAFLPEATLIEGSLRAGQVGYFIANLKKVKDVKIGDTVTTVKHSAKVPLEGFKEINPVMFAGIYPIDSSDFDALKDALSRLQLNDSALTIEQESSHSLGFGFRCGFLGLLHLEIVFERIIREFDLDIIATAPSVIYKVVLKNGKTLFIDNPTAYPDPSIIEHMEEPWVHVNIITPQEYLSSIMNLCLDKRGVCLKTEMLDQHRLVLSYDLPLNEIVSDFNDKLKSVTKGYGSFDYRLGDYRKGSIIKLEILINDEPVDAFSCLVHRDKAEARGRSICEKLVGVIPQQLFKIPIQAAINKKVIARETIRALSKNVTAKCYGGDITRKRKLWEKQKKGKKRMKEFGKVSIPNTAFIEVLKID.

The tr-type G domain occupies 7–188; the sequence is ENIRNFSIIA…AIVELIPPPK (182 aa). GTP is bound by residues 19–24 and 135–138; these read DHGKST and NKID.

This sequence belongs to the TRAFAC class translation factor GTPase superfamily. Classic translation factor GTPase family. LepA subfamily.

It localises to the cell inner membrane. It catalyses the reaction GTP + H2O = GDP + phosphate + H(+). Functionally, required for accurate and efficient protein synthesis under certain stress conditions. May act as a fidelity factor of the translation reaction, by catalyzing a one-codon backward translocation of tRNAs on improperly translocated ribosomes. Back-translocation proceeds from a post-translocation (POST) complex to a pre-translocation (PRE) complex, thus giving elongation factor G a second chance to translocate the tRNAs correctly. Binds to ribosomes in a GTP-dependent manner. The sequence is that of Elongation factor 4 from Chlamydia abortus (strain DSM 27085 / S26/3) (Chlamydophila abortus).